The chain runs to 525 residues: GMP synthase [glutamine-hydrolyzing] (525 aa).

Residues 9–207 (RILILDFGSQ…VRDICQCEAL (199 aa)) form the Glutamine amidotransferase type-1 domain. Cys86 serves as the catalytic Nucleophile. Residues His181 and Glu183 contribute to the active site. Residues 208–400 (WTPAKIIDDA…LGLPYDMLYR (193 aa)) form the GMPS ATP-PPase domain. An ATP-binding site is contributed by 235–241 (SGGVDSS).

Homodimer.

The enzyme catalyses XMP + L-glutamine + ATP + H2O = GMP + L-glutamate + AMP + diphosphate + 2 H(+). The protein operates within purine metabolism; GMP biosynthesis; GMP from XMP (L-Gln route): step 1/1. In terms of biological role, catalyzes the synthesis of GMP from XMP. This is GMP synthase [glutamine-hydrolyzing] from Shigella dysenteriae serotype 1 (strain Sd197).